A 335-amino-acid chain; its full sequence is UPF0353 protein MMAR_2288 (335 aa).

A run of 2 helical transmembrane segments spans residues 18-38 and 67-87; these read WFFL…VLQL and IPAM…AGPT. The 197-residue stretch at 98–294 folds into the VWFA domain; the sequence is VVMLVIDVSQ…AELNSVYASL (197 aa). The helical transmembrane segment at 309 to 329 threads the bilayer; sequence MGWLRLGALVLVAAALAALLI.

The protein belongs to the UPF0353 family.

The protein localises to the cell membrane. The sequence is that of UPF0353 protein MMAR_2288 from Mycobacterium marinum (strain ATCC BAA-535 / M).